Consider the following 328-residue polypeptide: Stress response kinase A (328 aa).

Asp201 functions as the Proton acceptor in the catalytic mechanism. Mg(2+) is bound by residues Asn206 and Asp217. Residue Asp217 is part of the active site.

The protein belongs to the SrkA/RdoA protein kinase family. As to quaternary structure, monomer. It depends on Mg(2+) as a cofactor.

The protein resides in the cytoplasm. It catalyses the reaction L-seryl-[protein] + ATP = O-phospho-L-seryl-[protein] + ADP + H(+). It carries out the reaction L-threonyl-[protein] + ATP = O-phospho-L-threonyl-[protein] + ADP + H(+). A protein kinase that phosphorylates Ser and Thr residues. Probably acts to suppress the effects of stress linked to accumulation of reactive oxygen species. Probably involved in the extracytoplasmic stress response. This Salmonella paratyphi A (strain ATCC 9150 / SARB42) protein is Stress response kinase A.